Here is a 220-residue protein sequence, read N- to C-terminus: MELYLDTANVAEVERLAHIFPIAGVTTNPSIVAASKESIWDVLPRLQNAIGEEGTLFAQTMSRDAKGMVEEAKRLNNAIPGIVVKIPVTAEGLAAIKLLKKEGIVTLGTAVYSASQGLLAALAGAKYVAPYVNRVDAQGGDGIRMVQELQTLLEHHAPDSMVLAASFKTPRQALDCLLAGCQAITLPLDVAQQMLNTPAVESAIEKFEQDWKNAFGNLNL.

The active-site Schiff-base intermediate with substrate is the lysine 85.

Belongs to the transaldolase family. Type 3A subfamily. As to quaternary structure, homodecamer.

It is found in the cytoplasm. The catalysed reaction is beta-D-fructose 6-phosphate = dihydroxyacetone + D-glyceraldehyde 3-phosphate. In terms of biological role, catalyzes the reversible formation of fructose 6-phosphate from dihydroxyacetone and D-glyceraldehyde 3-phosphate via an aldolization reaction. In Salmonella heidelberg (strain SL476), this protein is Fructose-6-phosphate aldolase.